The chain runs to 920 residues: Plasma membrane ATPase (920 aa).

Residues 1–77 (MADHSASGAP…TPGGGRVVPE (77 aa)) form a disordered region. Topologically, residues 1-115 (MADHSASGAP…KEEKENHFLK (115 aa)) are cytoplasmic. Residues 38-51 (EDDEDEDIDALIED) show a composition bias toward acidic residues. The helical transmembrane segment at 116 to 138 (FLGFFVGPIQFVMEGAAVLAAGL) threads the bilayer. Topologically, residues 139 to 140 (ED) are extracellular. Residues 141-160 (WVDFGVICGLLLLNAVVGFV) traverse the membrane as a helical segment. Residues 161–291 (QEFQAGSIVD…GSGHFTEVLN (131 aa)) lie on the Cytoplasmic side of the membrane. Residues 292-314 (GIGTILLILVIFTLLIVWVSSFY) form a helical membrane-spanning segment. Over 315 to 321 (RSNPIVQ) the chain is Extracellular. Residues 322-354 (ILEFTLAITIIGVPVGLPAVVTTTMAVGAAYLA) form a helical membrane-spanning segment. At 355–687 (KKKAIVQKLS…LKTSRQIFHR (333 aa)) the chain is on the cytoplasmic side. Asp-378 (4-aspartylphosphate intermediate) is an active-site residue. Residues Asp-634 and Asp-638 each contribute to the Mg(2+) site. A helical membrane pass occupies residues 688–713 (MYAYVVYRIALSIHLEIFLGLWIAIL). Residues 714–720 (NRSLNIE) lie on the Extracellular side of the membrane. A helical membrane pass occupies residues 721 to 738 (LVVFIAIFADVATLAIAY). Topologically, residues 739–754 (DNAPYSQTPVKWNLPK) are cytoplasmic. Residues 755 to 779 (LWGMSVLLGVVLAVGTWITVTTMYA) traverse the membrane as a helical segment. The Extracellular segment spans residues 780-806 (QGENGGIVQNFGNMDEVLFLQISLTEN). The next 2 helical transmembrane spans lie at 807 to 826 (WLIF…PSWQ) and 827 to 847 (LSGA…WGWF). At 848-853 (EHSDTS) the chain is on the extracellular side. Residues 854–878 (IVAVVRIWIFSFGIFCIMGGVYYIL) form a helical membrane-spanning segment. The Cytoplasmic portion of the chain corresponds to 879–920 (QDSVGFDNLMHGKSPKGNQKQRSLEDFVVSLQRVSTQHEKSQ).

Belongs to the cation transport ATPase (P-type) (TC 3.A.3) family. Type IIIA subfamily.

It is found in the cell membrane. The catalysed reaction is ATP + H2O + H(+)(in) = ADP + phosphate + 2 H(+)(out). The plasma membrane ATPase of plants and fungi is a hydrogen ion pump. The proton gradient it generates drives the active transport of nutrients by H(+)-symport. The resulting external acidification and/or internal alkinization may mediate growth responses. The chain is Plasma membrane ATPase (pma-1) from Neurospora crassa (strain ATCC 24698 / 74-OR23-1A / CBS 708.71 / DSM 1257 / FGSC 987).